The chain runs to 69 residues: DNA gyrase inhibitor YacG (69 aa).

Cysteine 13, cysteine 16, cysteine 32, and cysteine 36 together coordinate Zn(2+).

This sequence belongs to the DNA gyrase inhibitor YacG family. As to quaternary structure, interacts with GyrB. Requires Zn(2+) as cofactor.

Its function is as follows. Inhibits all the catalytic activities of DNA gyrase by preventing its interaction with DNA. Acts by binding directly to the C-terminal domain of GyrB, which probably disrupts DNA binding by the gyrase. This chain is DNA gyrase inhibitor YacG, found in Neisseria gonorrhoeae (strain ATCC 700825 / FA 1090).